A 195-amino-acid polypeptide reads, in one-letter code: Dephospho-CoA kinase (195 aa).

Positions 3–195 (IVGLTGGIGS…IALHENYLNH (193 aa)) constitute a DPCK domain. Residue 11 to 16 (GSGKSA) coordinates ATP.

This sequence belongs to the CoaE family.

The protein resides in the cytoplasm. The catalysed reaction is 3'-dephospho-CoA + ATP = ADP + CoA + H(+). It participates in cofactor biosynthesis; coenzyme A biosynthesis; CoA from (R)-pantothenate: step 5/5. Functionally, catalyzes the phosphorylation of the 3'-hydroxyl group of dephosphocoenzyme A to form coenzyme A. The protein is Dephospho-CoA kinase of Acinetobacter baylyi (strain ATCC 33305 / BD413 / ADP1).